A 254-amino-acid chain; its full sequence is 5-oxoprolinase subunit A (254 aa).

This sequence belongs to the LamB/PxpA family. As to quaternary structure, forms a complex composed of PxpA, PxpB and PxpC.

The enzyme catalyses 5-oxo-L-proline + ATP + 2 H2O = L-glutamate + ADP + phosphate + H(+). Functionally, catalyzes the cleavage of 5-oxoproline to form L-glutamate coupled to the hydrolysis of ATP to ADP and inorganic phosphate. This Burkholderia vietnamiensis (strain G4 / LMG 22486) (Burkholderia cepacia (strain R1808)) protein is 5-oxoprolinase subunit A.